Reading from the N-terminus, the 278-residue chain is Hydroxyethylthiazole kinase (278 aa).

Met51 lines the substrate pocket. 2 residues coordinate ATP: Arg127 and Ser173. Gly201 is a binding site for substrate.

Belongs to the Thz kinase family. Requires Mg(2+) as cofactor.

The catalysed reaction is 5-(2-hydroxyethyl)-4-methylthiazole + ATP = 4-methyl-5-(2-phosphooxyethyl)-thiazole + ADP + H(+). It participates in cofactor biosynthesis; thiamine diphosphate biosynthesis; 4-methyl-5-(2-phosphoethyl)-thiazole from 5-(2-hydroxyethyl)-4-methylthiazole: step 1/1. Its function is as follows. Catalyzes the phosphorylation of the hydroxyl group of 4-methyl-5-beta-hydroxyethylthiazole (THZ). The polypeptide is Hydroxyethylthiazole kinase (Leptothrix cholodnii (strain ATCC 51168 / LMG 8142 / SP-6) (Leptothrix discophora (strain SP-6))).